The following is a 993-amino-acid chain: Protein translocase subunit SecA (993 aa).

Residues Gln-102, 120–124 (GEGKT), and Asp-523 contribute to the ATP site. Positions 910 to 962 (ENAPEPQISGGNGQQPPQRRQQTSLDDLEKQFERKKKRELEQARMAGGGMPDA) are disordered. A compositionally biased stretch (basic and acidic residues) spans 936 to 951 (DLEKQFERKKKRELEQ). Zn(2+) contacts are provided by Cys-979, Cys-981, Cys-990, and His-991.

The protein belongs to the SecA family. As to quaternary structure, monomer and homodimer. Part of the essential Sec protein translocation apparatus which comprises SecA, SecYEG and auxiliary proteins SecDF. Other proteins may also be involved. Requires Zn(2+) as cofactor.

The protein resides in the cell inner membrane. It is found in the cytoplasm. It catalyses the reaction ATP + H2O + cellular proteinSide 1 = ADP + phosphate + cellular proteinSide 2.. In terms of biological role, part of the Sec protein translocase complex. Interacts with the SecYEG preprotein conducting channel. Has a central role in coupling the hydrolysis of ATP to the transfer of proteins into and across the cell membrane, serving as an ATP-driven molecular motor driving the stepwise translocation of polypeptide chains across the membrane. This is Protein translocase subunit SecA from Koribacter versatilis (strain Ellin345).